The following is an 836-amino-acid chain: MLISQNWVTELLGRSNPDWKVSPAELDSGYVRVGFETEGYSAIPETTGPLVIGRVETIEELEGFKKPIRHCFVNVGDANGTGELQSIVCGARNFQEGSYVVVSLPGAVLPGNFAISARETYGRMSAGMICSAAELGLSDKQNSGIITLPNEIAEPGTDARSIVGLDDTVFDVNITPDRGYALSARGLTRELASAFNLKFVDPAVDLNVAGVDTSDVPESSGELIKVDLRPETQARRFGVRKVSGIDPKAPTPFWMQRELMLSGQRCVNAATDVTNFVMLLLGQPMHAFDANLIKGGLVVRNALEGESFETLDHVKRTLSAEDVVISDDTGIQSLAGVMGGTTSEISDETTDVFFEAANWHPITTARTSRRHKLSTEASRRFERGVDPEIIEVALDVACALLVSIAGGSVESARTLIGSAPSMPQIRMKTSRPAELAGVAYSDATVIARLKEVGCAVEVDGDDLLVTPPTWRPDMTMSADLVEEVLRLEGLEDIPTIVPLAPVGSGLSPAQLRRRAIGHALAYSGYAEILPTPFIRNDTFDVWGLAADDERRSVVTVQNPLDAEYGVLATTLLPSMLEAVTRNVSRGQTSVNLFGLQQVSFKRGSGISPMLDVRQRPSDNEVAELLNSLPVQPLHVATVGAGFMELEGPWGHGRTYSFADAIESARVVARAAGVELNVENVEMLPWHPGRCAALKAGDHIVGYAGELHPQIVEALNLPARTCAMELDVSALPLKESFPAPVLSAFPVLHQDLALVVDESVPAESVRKVIEDAAGELLEKVELFDVYRSEALGAEKKSLAFSLEFRAQDRTLTDDECSEGRLAAAGRAAELFGATMRA.

Residues 44-160 (PETTGPLVIG…EIAEPGTDAR (117 aa)) enclose the tRNA-binding domain. The B5 domain occupies 420-495 (PSMPQIRMKT…RLEGLEDIPT (76 aa)). Asp-473, Asp-479, Glu-482, and Glu-483 together coordinate Mg(2+). The FDX-ACB domain maps to 742 to 835 (SAFPVLHQDL…AAELFGATMR (94 aa)).

This sequence belongs to the phenylalanyl-tRNA synthetase beta subunit family. Type 1 subfamily. As to quaternary structure, tetramer of two alpha and two beta subunits. It depends on Mg(2+) as a cofactor.

The protein resides in the cytoplasm. It carries out the reaction tRNA(Phe) + L-phenylalanine + ATP = L-phenylalanyl-tRNA(Phe) + AMP + diphosphate + H(+). The protein is Phenylalanine--tRNA ligase beta subunit of Corynebacterium diphtheriae (strain ATCC 700971 / NCTC 13129 / Biotype gravis).